Consider the following 476-residue polypeptide: Abscisic acid 8'-hydroxylase CYP707A1 (476 aa).

Residues 5–25 (FEIFLYISMFVLGYLSYYFCF) traverse the membrane as a helical segment. C422 contributes to the heme binding site.

It belongs to the cytochrome P450 family. The cofactor is heme. As to expression, expressed in ovaries (specifically in ovules and placenta), sepals, petals and pedicels.

The protein localises to the membrane. It carries out the reaction 2-cis-(+)-abscisate + reduced [NADPH--hemoprotein reductase] + O2 = (+)-8'-hydroxyabscisate + oxidized [NADPH--hemoprotein reductase] + H2O + H(+). It participates in plant hormone degradation; abscisic acid degradation. Its function is as follows. Involved in the oxidative degradation of abscisic acid, especially in pollinated ovaries. This Solanum lycopersicum (Tomato) protein is Abscisic acid 8'-hydroxylase CYP707A1.